Consider the following 38-residue polypeptide: Spheniscin-1 (38 aa).

3 cysteine pairs are disulfide-bonded: Cys5-Cys33, Cys12-Cys27, and Cys17-Cys34.

As to quaternary structure, monomer. Secreted into the stomach cavity.

Its subcellular location is the secreted. Has antifungal activity and antibacterial activity against Gram-positive and Gram-negative bacteria. Involved in the process of food preservation in the stomach during the incubation fast. May also be present during infection. The sequence is that of Spheniscin-1 from Aptenodytes patagonicus (King penguin).